We begin with the raw amino-acid sequence, 101 residues long: Urease subunit beta (101 aa).

It belongs to the urease beta subunit family. Heterotrimer of UreA (gamma), UreB (beta) and UreC (alpha) subunits. Three heterotrimers associate to form the active enzyme.

The protein localises to the cytoplasm. It catalyses the reaction urea + 2 H2O + H(+) = hydrogencarbonate + 2 NH4(+). Its pathway is nitrogen metabolism; urea degradation; CO(2) and NH(3) from urea (urease route): step 1/1. This chain is Urease subunit beta, found in Mesorhizobium japonicum (strain LMG 29417 / CECT 9101 / MAFF 303099) (Mesorhizobium loti (strain MAFF 303099)).